The following is a 398-amino-acid chain: Dual specificity protein phosphatase 4 (398 aa).

At Val2 the chain carries N-acetylvaline. Residues 45–163 (SGGKCLLLDC…FSSEYPEFCS (119 aa)) form the Rhodanese domain. Positions 199 to 340 (GPVEILPFLY…LLQFESQVLT (142 aa)) constitute a Tyrosine-protein phosphatase domain. The active-site Phosphocysteine intermediate is Cys284. Residues Ser390 and Ser395 each carry the phosphoserine; by MAPK modification.

This sequence belongs to the protein-tyrosine phosphatase family. Non-receptor class dual specificity subfamily. In terms of assembly, hollow spherical complex composed of 24 subunits with pseudooctahedral symmetry, has a tetramer as the basic unit. In terms of processing, phosphorylation in the C-terminus by ERK1/2 inhibits proteasomal degradation and stabilizes the protein.

It is found in the nucleus. It carries out the reaction O-phospho-L-tyrosyl-[protein] + H2O = L-tyrosyl-[protein] + phosphate. It catalyses the reaction O-phospho-L-seryl-[protein] + H2O = L-seryl-[protein] + phosphate. The catalysed reaction is O-phospho-L-threonyl-[protein] + H2O = L-threonyl-[protein] + phosphate. In terms of biological role, regulates mitogenic signal transduction by dephosphorylating both Thr and Tyr residues on MAP kinases ERK1 and ERK2. This Mus musculus (Mouse) protein is Dual specificity protein phosphatase 4 (Dusp4).